The following is a 176-amino-acid chain: Beta-carotene hydroxylase (176 aa).

One can recognise a Fatty acid hydroxylase domain in the interval 10–126; sequence LSVIAMEGIA…AHRLHHAVRG (117 aa). Residues 152-176 form a disordered region; the sequence is HGRPPKRDAAKDRPDAASPSSSSPE. The segment covering 156–166 has biased composition (basic and acidic residues); the sequence is PKRDAAKDRPD. Residues 167-176 are compositionally biased toward low complexity; the sequence is AASPSSSSPE.

Belongs to the sterol desaturase family.

It participates in carotenoid biosynthesis; zeaxanthin biosynthesis. Its function is as follows. Catalyzes the hydroxylation reaction from beta-carotene to zeaxanthin. In Pseudescherichia vulneris (Escherichia vulneris), this protein is Beta-carotene hydroxylase (crtZ).